The primary structure comprises 647 residues: UvrABC system protein C (647 aa).

Residues 16–95 (VEPGVYRFRD…IKEFDPRFNV (80 aa)) form the GIY-YIG domain. In terms of domain architecture, UVR spans 208 to 243 (DRYARELEQQMNAAAENLDFERAARLRDDRSALKRA).

The protein belongs to the UvrC family. Interacts with UvrB in an incision complex.

The protein resides in the cytoplasm. Its function is as follows. The UvrABC repair system catalyzes the recognition and processing of DNA lesions. UvrC both incises the 5' and 3' sides of the lesion. The N-terminal half is responsible for the 3' incision and the C-terminal half is responsible for the 5' incision. The polypeptide is UvrABC system protein C (Mycobacterium marinum (strain ATCC BAA-535 / M)).